Here is a 524-residue protein sequence, read N- to C-terminus: Chromosomal replication initiator protein DnaA (524 aa).

The domain I, interacts with DnaA modulators stretch occupies residues 1–73 (MELPESAWEQ…DELLSSADHH (73 aa)). The interval 73–187 (HPITSVEISV…DVEGGLQHKS (115 aa)) is domain II. Polar residues-rich tracts occupy residues 86 to 95 (RSTSFETNQG), 106 to 126 (APRQ…QPQQ), and 153 to 165 (NGYN…QPYN). Residues 86 to 173 (RSTSFETNQG…YNDNPMGQGK (88 aa)) are disordered. Positions 188-404 (NLNPTFIFDN…GALKRVIANA (217 aa)) are domain III, AAA+ region. Positions 232, 234, 235, and 236 each coordinate ATP. The domain IV, binds dsDNA stretch occupies residues 405-524 (HFTGRDISVE…VKNLLRTLTT (120 aa)).

Belongs to the DnaA family. As to quaternary structure, oligomerizes as a right-handed, spiral filament on DNA at oriC.

Its subcellular location is the cytoplasm. Its function is as follows. Plays an essential role in the initiation and regulation of chromosomal replication. ATP-DnaA binds to the origin of replication (oriC) to initiate formation of the DNA replication initiation complex once per cell cycle. Binds the DnaA box (a 9 base pair repeat at the origin) and separates the double-stranded (ds)DNA. Forms a right-handed helical filament on oriC DNA; dsDNA binds to the exterior of the filament while single-stranded (ss)DNA is stabiized in the filament's interior. The ATP-DnaA-oriC complex binds and stabilizes one strand of the AT-rich DNA unwinding element (DUE), permitting loading of DNA polymerase. After initiation quickly degrades to an ADP-DnaA complex that is not apt for DNA replication. Binds acidic phospholipids. The polypeptide is Chromosomal replication initiator protein DnaA (Saccharophagus degradans (strain 2-40 / ATCC 43961 / DSM 17024)).